Reading from the N-terminus, the 301-residue chain is NAD kinase (301 aa).

Aspartate 73 (proton acceptor) is an active-site residue. Residues 73 to 74, 160 to 161, arginine 188, aspartate 190, alanine 198, 201 to 206, alanine 225, and glutamine 257 each bind NAD(+); these read DG, NE, and TAYNIS.

Belongs to the NAD kinase family. Requires a divalent metal cation as cofactor.

Its subcellular location is the cytoplasm. The catalysed reaction is NAD(+) + ATP = ADP + NADP(+) + H(+). Functionally, involved in the regulation of the intracellular balance of NAD and NADP, and is a key enzyme in the biosynthesis of NADP. Catalyzes specifically the phosphorylation on 2'-hydroxyl of the adenosine moiety of NAD to yield NADP. In Helicobacter hepaticus (strain ATCC 51449 / 3B1), this protein is NAD kinase.